The primary structure comprises 380 residues: Glucose-1-phosphate adenylyltransferase (380 aa).

Alpha-D-glucose 1-phosphate contacts are provided by residues G164, 179–180 (EK), and S190.

Belongs to the bacterial/plant glucose-1-phosphate adenylyltransferase family. In terms of assembly, homotetramer.

It carries out the reaction alpha-D-glucose 1-phosphate + ATP + H(+) = ADP-alpha-D-glucose + diphosphate. Its pathway is glycan biosynthesis; glycogen biosynthesis. Functionally, involved in the biosynthesis of ADP-glucose, a building block required for the elongation reactions to produce glycogen. Catalyzes the reaction between ATP and alpha-D-glucose 1-phosphate (G1P) to produce pyrophosphate and ADP-Glc. This Lactococcus lactis subsp. cremoris (strain SK11) protein is Glucose-1-phosphate adenylyltransferase.